The primary structure comprises 338 residues: Ketol-acid reductoisomerase (NADP(+)) (338 aa).

One can recognise a KARI N-terminal Rossmann domain in the interval 1-181 (MKVFYDKDAD…GGGRAGIIET (181 aa)). NADP(+) is bound by residues 24–27 (YGSQ), Arg-47, and Ser-52. Residue His-107 is part of the active site. Gly-133 serves as a coordination point for NADP(+). A KARI C-terminal knotted domain is found at 182 to 327 (NFREETETDL…AKLRAMMPWI (146 aa)). Mg(2+)-binding residues include Asp-190, Glu-194, Glu-226, and Glu-230. Ser-251 serves as a coordination point for substrate.

This sequence belongs to the ketol-acid reductoisomerase family. Requires Mg(2+) as cofactor.

It carries out the reaction (2R)-2,3-dihydroxy-3-methylbutanoate + NADP(+) = (2S)-2-acetolactate + NADPH + H(+). It catalyses the reaction (2R,3R)-2,3-dihydroxy-3-methylpentanoate + NADP(+) = (S)-2-ethyl-2-hydroxy-3-oxobutanoate + NADPH + H(+). It functions in the pathway amino-acid biosynthesis; L-isoleucine biosynthesis; L-isoleucine from 2-oxobutanoate: step 2/4. It participates in amino-acid biosynthesis; L-valine biosynthesis; L-valine from pyruvate: step 2/4. Involved in the biosynthesis of branched-chain amino acids (BCAA). Catalyzes an alkyl-migration followed by a ketol-acid reduction of (S)-2-acetolactate (S2AL) to yield (R)-2,3-dihydroxy-isovalerate. In the isomerase reaction, S2AL is rearranged via a Mg-dependent methyl migration to produce 3-hydroxy-3-methyl-2-ketobutyrate (HMKB). In the reductase reaction, this 2-ketoacid undergoes a metal-dependent reduction by NADPH to yield (R)-2,3-dihydroxy-isovalerate. The polypeptide is Ketol-acid reductoisomerase (NADP(+)) (Ralstonia nicotianae (strain ATCC BAA-1114 / GMI1000) (Ralstonia solanacearum)).